A 101-amino-acid polypeptide reads, in one-letter code: Omega-scoloptoxin(10)-Ssd1b (101 aa).

The first 23 residues, Met1–Ala23, serve as a signal peptide directing secretion.

In terms of processing, contains 3 disulfide bonds. As to expression, expressed by the venom gland.

Its subcellular location is the secreted. Functionally, voltage-gated calcium channel inhibitor. The protein is Omega-scoloptoxin(10)-Ssd1b of Scolopendra dehaani (Thai centipede).